The chain runs to 425 residues: Histidine--tRNA ligase 1 (425 aa).

The protein belongs to the class-II aminoacyl-tRNA synthetase family. In terms of assembly, homodimer.

The protein localises to the cytoplasm. It catalyses the reaction tRNA(His) + L-histidine + ATP = L-histidyl-tRNA(His) + AMP + diphosphate + H(+). This is Histidine--tRNA ligase 1 from Bacillus thuringiensis subsp. konkukian (strain 97-27).